A 406-amino-acid polypeptide reads, in one-letter code: Putative permease Rv2963 (406 aa).

9 consecutive transmembrane segments (helical) span residues 30–50 (WEIL…QAVV), 67–87 (LVIA…AVAL), 111–131 (LVVE…TAAE), 132–152 (FVGG…FVGA), 208–228 (LAIL…AAWV), 246–266 (AVWG…CSIG), 278–298 (GISF…LPIL), 312–332 (VLLG…ELLF), and 361–381 (VIFL…GGLP).

This sequence belongs to the UPF0718 family.

It localises to the cell membrane. In Mycobacterium tuberculosis (strain ATCC 25618 / H37Rv), this protein is Putative permease Rv2963.